The sequence spans 181 residues: Bifunctional adenosylcobalamin biosynthesis protein CobU (181 aa).

Residues 7–14 (GGARSGKS) and 31–33 (ATS) contribute to the GTP site. The active-site GMP-histidine intermediate is His-47. Residues 48-51 (KDGR), Glu-59, and Glu-81 contribute to the GTP site.

This sequence belongs to the CobU/CobP family. In terms of assembly, homotrimer.

The enzyme catalyses adenosylcob(III)inamide + GTP = adenosylcob(III)inamide phosphate + GDP + H(+). The catalysed reaction is adenosylcob(III)inamide + ATP = adenosylcob(III)inamide phosphate + ADP + H(+). It catalyses the reaction adenosylcob(III)inamide phosphate + GTP + H(+) = adenosylcob(III)inamide-GDP + diphosphate. It functions in the pathway cofactor biosynthesis; adenosylcobalamin biosynthesis; adenosylcobalamin from cob(II)yrinate a,c-diamide: step 5/7. The protein operates within cofactor biosynthesis; adenosylcobalamin biosynthesis; adenosylcobalamin from cob(II)yrinate a,c-diamide: step 6/7. In terms of biological role, catalyzes ATP-dependent phosphorylation of adenosylcobinamide and addition of GMP to adenosylcobinamide phosphate. The polypeptide is Bifunctional adenosylcobalamin biosynthesis protein CobU (cobU) (Salmonella typhimurium (strain LT2 / SGSC1412 / ATCC 700720)).